A 512-amino-acid polypeptide reads, in one-letter code: DEAD-box ATP-dependent RNA helicase 5 (512 aa).

Disordered regions lie at residues 1–33 (MGRSMLPEQQEDVSRKSKKEKKSKKDKKRKLEA) and 45–76 (ATSTDEATKSSKKKRAKGDLGQGEEAENGGGK). Residues 14–45 (SRKSKKEKKSKKDKKRKLEAEAEVVVVEAAAA) adopt a coiled-coil conformation. The span at 16–30 (KSKKEKKSKKDKKRK) shows a compositional bias: basic residues. Positions 94 to 120 (SSFAATALPPQVLDCCKGFERPSPIQA) match the Q motif motif. Positions 123–300 (WPYLLDGRDF…QEFMDPNPIK (178 aa)) constitute a Helicase ATP-binding domain. 136–143 (AATGSGKT) is a binding site for ATP. Positions 248 to 251 (DEAD) match the DEAD box motif. The Helicase C-terminal domain maps to 333 to 476 (LLDKYHKAQR…VVPPALTKFG (144 aa)).

This sequence belongs to the DEAD box helicase family. DDX5/DBP2 subfamily.

It localises to the nucleus. Its subcellular location is the nucleolus. The catalysed reaction is ATP + H2O = ADP + phosphate + H(+). ATP-dependent RNA helicase required for 60S ribosomal subunit synthesis. Involved in efficient pre-rRNA processing, predominantly at site A3, which is necessary for the normal formation of 25S and 5.8S rRNAs. The polypeptide is DEAD-box ATP-dependent RNA helicase 5 (Oryza sativa subsp. japonica (Rice)).